The following is a 198-amino-acid chain: Ras-related protein Rab-34, isoform NARR (198 aa).

Tandem repeats lie at residues 7 to 15 (PRDDVGSPR), 16 to 24 (PRVIVGTIR), 25 to 33 (PRVIVGTIR), 34 to 42 (PRVIVGSAR), 43 to 51 (ARPPPDGTP), 52 to 60 (RPQLAAEES), 61 to 69 (PRPRVIFGT), 70 to 78 (PRARVILGS), 79 to 87 (PRPRVIVSS), 88 to 96 (PWPAVVVAS), 97 to 105 (PRPRTPVGS), 106 to 114 (PWPRVVVGT), and 115 to 123 (PRPRVIVGS). Residues 7–125 (PRDDVGSPRP…RPRVIVGSPR (119 aa)) form a 13 x 9 AA approximate tandem-repeats of P-R-V-I-V-G-(S/T)-P-R region. Ser13 is subject to Phosphoserine. Residues 37 to 64 (IVGSARARPPPDGTPRPQLAAEESPRPR) form a disordered region. Thr69 bears the Phosphothreonine mark. Residues Ser78, Ser87, and Ser96 each carry the phosphoserine modification. Low complexity predominate over residues 94–121 (VASPRPRTPVGSPWPRVVVGTPRPRVIV). The disordered stretch occupies residues 94 to 198 (VASPRPRTPV…GAPDRHRGQI (105 aa)). Ser123 carries the phosphoserine modification. The span at 145-157 (RRQDEHSGTRAEG) shows a compositional bias: basic and acidic residues. Positions 161–178 (GGAAPVPEEGGRFARAQR) are enriched in low complexity.

In terms of assembly, may interact with EIF5A and ERF1. Phosphorylated during M-phase.

It localises to the nucleus. The protein resides in the nucleolus. In Homo sapiens (Human), this protein is Ras-related protein Rab-34, isoform NARR (RAB34).